A 96-amino-acid chain; its full sequence is Aspartyl/glutamyl-tRNA(Asn/Gln) amidotransferase subunit C (96 aa).

Belongs to the GatC family. As to quaternary structure, heterotrimer of A, B and C subunits.

The catalysed reaction is L-glutamyl-tRNA(Gln) + L-glutamine + ATP + H2O = L-glutaminyl-tRNA(Gln) + L-glutamate + ADP + phosphate + H(+). It catalyses the reaction L-aspartyl-tRNA(Asn) + L-glutamine + ATP + H2O = L-asparaginyl-tRNA(Asn) + L-glutamate + ADP + phosphate + 2 H(+). Allows the formation of correctly charged Asn-tRNA(Asn) or Gln-tRNA(Gln) through the transamidation of misacylated Asp-tRNA(Asn) or Glu-tRNA(Gln) in organisms which lack either or both of asparaginyl-tRNA or glutaminyl-tRNA synthetases. The reaction takes place in the presence of glutamine and ATP through an activated phospho-Asp-tRNA(Asn) or phospho-Glu-tRNA(Gln). This is Aspartyl/glutamyl-tRNA(Asn/Gln) amidotransferase subunit C from Wolinella succinogenes (strain ATCC 29543 / DSM 1740 / CCUG 13145 / JCM 31913 / LMG 7466 / NCTC 11488 / FDC 602W) (Vibrio succinogenes).